The following is a 487-amino-acid chain: Argininosuccinate lyase (487 aa).

It belongs to the lyase 1 family. Argininosuccinate lyase subfamily.

The protein localises to the cytoplasm. It catalyses the reaction 2-(N(omega)-L-arginino)succinate = fumarate + L-arginine. Its pathway is amino-acid biosynthesis; L-arginine biosynthesis; L-arginine from L-ornithine and carbamoyl phosphate: step 3/3. This is Argininosuccinate lyase from Methanococcus aeolicus (strain ATCC BAA-1280 / DSM 17508 / OCM 812 / Nankai-3).